Here is a 471-residue protein sequence, read N- to C-terminus: Cysteine--tRNA ligase (471 aa).

Cysteine 29 provides a ligand contact to Zn(2+). A 'HIGH' region motif is present at residues 31–41 (LTVQSEPHVGH). Positions 215, 240, and 244 each coordinate Zn(2+). The 'KMSKS' region signature appears at 271–275 (KMSKS). Lysine 274 is an ATP binding site.

Belongs to the class-I aminoacyl-tRNA synthetase family. Monomer. The cofactor is Zn(2+).

It localises to the cytoplasm. The enzyme catalyses tRNA(Cys) + L-cysteine + ATP = L-cysteinyl-tRNA(Cys) + AMP + diphosphate. The protein is Cysteine--tRNA ligase of Nocardioides sp. (strain ATCC BAA-499 / JS614).